The following is a 360-amino-acid chain: DNA replication and repair protein RecF (360 aa).

Residue 33–40 coordinates ATP; the sequence is GENGSGKT.

Belongs to the RecF family.

The protein localises to the cytoplasm. Functionally, the RecF protein is involved in DNA metabolism; it is required for DNA replication and normal SOS inducibility. RecF binds preferentially to single-stranded, linear DNA. It also seems to bind ATP. In Rickettsia conorii (strain ATCC VR-613 / Malish 7), this protein is DNA replication and repair protein RecF.